A 1479-amino-acid chain; its full sequence is Type VII secretion system protein EssC (1479 aa).

The Cytoplasmic segment spans residues 1-229; it reads MHKLIIKYNK…RPPQPIQKNN (229 aa). Residues 230-252 traverse the membrane as a helical segment; sequence TVIWRSIIPPLVMIALTVVIFLV. The Extracellular portion of the chain corresponds to 253–256; it reads RPIG. Residues 257–279 form a helical membrane-spanning segment; the sequence is IYILMMIGMSSVTIVFGITTYFS. Residues 280 to 1479 lie on the Cytoplasmic side of the membrane; the sequence is EKKKYNKDVE…QAYQKIRWFK (1200 aa). FtsK domains are found at residues 652 to 846 and 997 to 1183; these read DDIL…QDSN and QGPM…SEVS. ATP contacts are provided by residues 672 to 679 and 1014 to 1021; these read GTTGSGKS and GSPGYGRT.

This sequence belongs to the EssC family. Homooligomer. Interacts with EsaE.

The protein resides in the cell membrane. Its function is as follows. Component of the type VII secretion system (Ess). Required for the secretion of substrates including EsxA and EsxB. However, unable to support secretion of the substrate protein EsxC. The protein is Type VII secretion system protein EssC of Staphylococcus aureus (strain MSSA476).